The chain runs to 543 residues: CTP synthase (543 aa).

Residues 1–265 (MTNYIFVTGG…DQLVVDRFGL (265 aa)) form an amidoligase domain region. Ser-13 is a CTP binding site. Ser-13 lines the UTP pocket. ATP contacts are provided by residues 14 to 19 (SLGKGI) and Asp-71. Asp-71 and Glu-139 together coordinate Mg(2+). Residues 146–148 (DIE), 186–191 (KTKPTQ), and Lys-222 contribute to the CTP site. UTP-binding positions include 186–191 (KTKPTQ) and Lys-222. Residue 238-240 (KDV) participates in ATP binding. A Glutamine amidotransferase type-1 domain is found at 290 to 541 (NIGMIGKYVE…VAAAGKYQKE (252 aa)). Gly-351 provides a ligand contact to L-glutamine. Residue Cys-378 is the Nucleophile; for glutamine hydrolysis of the active site. Residues 379–382 (LGMQ), Glu-402, and Arg-469 each bind L-glutamine. Catalysis depends on residues His-514 and Glu-516.

This sequence belongs to the CTP synthase family. As to quaternary structure, homotetramer.

It catalyses the reaction UTP + L-glutamine + ATP + H2O = CTP + L-glutamate + ADP + phosphate + 2 H(+). It carries out the reaction L-glutamine + H2O = L-glutamate + NH4(+). The catalysed reaction is UTP + NH4(+) + ATP = CTP + ADP + phosphate + 2 H(+). Its pathway is pyrimidine metabolism; CTP biosynthesis via de novo pathway; CTP from UDP: step 2/2. With respect to regulation, allosterically activated by GTP, when glutamine is the substrate; GTP has no effect on the reaction when ammonia is the substrate. The allosteric effector GTP functions by stabilizing the protein conformation that binds the tetrahedral intermediate(s) formed during glutamine hydrolysis. Inhibited by the product CTP, via allosteric rather than competitive inhibition. Catalyzes the ATP-dependent amination of UTP to CTP with either L-glutamine or ammonia as the source of nitrogen. Regulates intracellular CTP levels through interactions with the four ribonucleotide triphosphates. The polypeptide is CTP synthase (Alteromonas mediterranea (strain DSM 17117 / CIP 110805 / LMG 28347 / Deep ecotype)).